A 256-amino-acid polypeptide reads, in one-letter code: GDSL esterase/lipase CPRD49 (256 aa).

Positions 1–27 (MVGPARPQIVLFGSSIVQMSFGHGGWG) are cleaved as a signal peptide. The Nucleophile role is filled by Ser-15. Asn-49 and Asn-79 each carry an N-linked (GlcNAc...) asparagine glycan. His-213 is an active-site residue. An N-linked (GlcNAc...) asparagine glycan is attached at Asn-243.

Belongs to the 'GDSL' lipolytic enzyme family. Specifically expressed in anthers (stages 8-12).

Its subcellular location is the secreted. This is GDSL esterase/lipase CPRD49 (CPRD49) from Arabidopsis thaliana (Mouse-ear cress).